A 417-amino-acid chain; its full sequence is Putative competence-damage inducible protein (417 aa).

Belongs to the CinA family.

This Shouchella clausii (strain KSM-K16) (Alkalihalobacillus clausii) protein is Putative competence-damage inducible protein.